Reading from the N-terminus, the 356-residue chain is PEP-dependent dihydroxyacetone kinase, dihydroxyacetone-binding subunit DhaK (356 aa).

The region spanning 7 to 352 (DVQDVLDEQL…WDAPVHTPAL (346 aa)) is the DhaK domain. Dihydroxyacetone contacts are provided by residues 53-56 (GSGH), Lys104, and Asp109. The Proton acceptor role is filled by His56. His218 acts as the Tele-hemiaminal-histidine intermediate in catalysis.

Homodimer. The dihydroxyacetone kinase complex is composed of a homodimer of DhaM, a homodimer of DhaK and the subunit DhaL. DhaL also forms a complex with DhaR.

The catalysed reaction is dihydroxyacetone + phosphoenolpyruvate = dihydroxyacetone phosphate + pyruvate. It functions in the pathway polyol metabolism; glycerol degradation. Its activity is regulated as follows. Inhibited by chloro-3-hydroxyacetone and D,L-glyceraldehyde. Functionally, dihydroxyacetone binding subunit of the dihydroxyacetone kinase, which is responsible for the phosphoenolpyruvate (PEP)-dependent phosphorylation of dihydroxyacetone via a phosphoryl group transfer from DhaL-ATP. Binds covalently dihydroxyacetone in hemiaminal linkage. DhaK also acts as corepressor of the transcription activator DhaR by binding to the sensor domain of DhaR. In the presence of dihydroxyacetone, DhaL-ADP displaces DhaK and stimulates DhaR activity. In the absence of dihydroxyacetone, DhaL-ADP is converted by the PTS to DhaL-ATP, which does not bind to DhaR. The chain is PEP-dependent dihydroxyacetone kinase, dihydroxyacetone-binding subunit DhaK from Escherichia coli (strain K12).